The chain runs to 837 residues: MEAEGVAVAAAAAAAAAAATIIASDDCDSRPGQELLVAWNTVSTGLVPPAALGLASSRTSGAVPPKEEELRAAVEVLRGHGLHSVLEEWFVEVLQNDLQGNIATEFWNAIALRENSVDEPQCLGLLLDAFGLLESRLDPYLHSLELLEKWTRLGLLMGAGAQGLREKVHTMLRGVLFFSTPRTFQEMVQRLYGRFLRVYMQSKRKGEGGTDPELEGELDSRYARRRYYRLLQSPLCAGCGSDKQQCWCRQALEQFNQLSQVLHRLSLLERVCAEAVTTTLHQVTRERMEDRCRGEYERSFLREFHKWIERVVGWLGKVFLQDNPTRPTSPEAGNTLRRWRCHVQRFFYRIYATLRIEELFSIIRDFPDSRPAIEDLKYCLERTDQRQQLLVSLKVALETRLLHPGVNTCDIITLYISAIKALRVLDPSMVILEVACEPIRRYLRTREDTVRQIVAGLTGDSDGTGDLAVELSKTDPACLETGQDSEDDSGEPEDWVPDPVDADPVKSSSKRRSSDIISLLVSIYGSKDLFINEYRSLLADRLLHQFSFSPEREIRNVELLKLRFGEAPMHFCEVMLKDMADSRRINANIREEDEKRPVEEQPPFGVYAVILSSEFWPPFKDEKLEVPEDIRAALDVYCKKYEKLKAMRTLSWKHTLGLVTMDVELADRTLSVAVTPVQAVVLLYFQNQASWTLEELSKVVKMPVALLRRRMSVWLQQGVLREEPPGTFSVIEEERPQDRDNMVLIDSDDESDSGMASQADQKEEELLLFWAYIQAMLTNLESLSLERIYSMLRMFVMTGPALAEIDLQELQGYLQKKVRDQQLIYSAGVYRLPKNSN.

Ser233, Ser329, Ser485, Ser549, and Ser712 each carry phosphoserine. The disordered stretch occupies residues 478-508 (CLETGQDSEDDSGEPEDWVPDPVDADPVKSS). The span at 483-496 (QDSEDDSGEPEDWV) shows a compositional bias: acidic residues. The residue at position 825 (Tyr825) is a Phosphotyrosine.

It belongs to the cullin family. The mammalian APC/C is composed at least of 14 distinct subunits ANAPC1, ANAPC2, CDC27/APC3, ANAPC4, ANAPC5, CDC16/APC6, ANAPC7, CDC23/APC8, ANAPC10, ANAPC11, CDC26/APC12, ANAPC13, ANAPC15 and ANAPC16 that assemble into a complex of at least 19 chains with a combined molecular mass of around 1.2 MDa; APC/C interacts with FZR1 and FBXO5. In the context of the APC/C complex, directly interacts with UBE2C and UBE2S. Interacts (via cullin domain) with ANAPC11 and with UBCH10. Interacts with NEUROD2. Interacts with FBXO43; the interaction is direct.

It participates in protein modification; protein ubiquitination. In terms of biological role, together with the RING-H2 protein ANAPC11, constitutes the catalytic component of the anaphase promoting complex/cyclosome (APC/C), a cell cycle-regulated E3 ubiquitin ligase that controls progression through mitosis and the G1 phase of the cell cycle. The APC/C complex acts by mediating ubiquitination and subsequent degradation of target proteins: it mainly mediates the formation of 'Lys-11'-linked polyubiquitin chains and, to a lower extent, the formation of 'Lys-48'- and 'Lys-63'-linked polyubiquitin chains. The APC/C complex catalyzes assembly of branched 'Lys-11'-/'Lys-48'-linked branched ubiquitin chains on target proteins. The CDC20-APC/C complex positively regulates the formation of synaptic vesicle clustering at active zone to the presynaptic membrane in postmitotic neurons. CDC20-APC/C-induced degradation of NEUROD2 drives presynaptic differentiation. The sequence is that of Anaphase-promoting complex subunit 2 (Anapc2) from Mus musculus (Mouse).